Here is a 130-residue protein sequence, read N- to C-terminus: Large ribosomal subunit protein bL20c (130 aa).

Belongs to the bacterial ribosomal protein bL20 family.

The protein localises to the plastid. It localises to the chloroplast. In terms of biological role, binds directly to 23S ribosomal RNA and is necessary for the in vitro assembly process of the 50S ribosomal subunit. It is not involved in the protein synthesizing functions of that subunit. The chain is Large ribosomal subunit protein bL20c from Oenothera argillicola (Appalachian evening primrose).